A 242-amino-acid chain; its full sequence is MAKVALVTGGSRGIGAAISKALKEAGYTVAANYAGNDDAARAFTEETGIKTYKWSVADYDACAAGIKQVEEELGPIAVLVNNAGITRDAMFHKMTPQQWKEVIDTNLTGLFNMTHPVWSGMRDRKYGRIVNISSINGQKGQAGQANYSAAKAGDLGFTKALAQEGARAGITVNAICPGYIGTEMVRAIDEKVLNEGIIPQIPVAAWAEPEEIARCVVFLASEDAGFITGSTHQAPNGGQFFV.

NADP(+) contacts are provided by residues 12–14 and 82–86; these read RGI and NAGIT. Substrate is bound by residues Asp88 and 141-144; that span reads QAGQ. Tyr147 (proton acceptor) is an active-site residue. 177 to 180 contributes to the NADP(+) binding site; it reads PGYI. Position 178–179 (178–179) interacts with substrate; sequence GY.

It belongs to the short-chain dehydrogenases/reductases (SDR) family.

Its subcellular location is the cytoplasm. The catalysed reaction is a (3R)-3-hydroxyacyl-CoA + NADP(+) = a 3-oxoacyl-CoA + NADPH + H(+). It participates in biopolymer metabolism; poly-(R)-3-hydroxybutanoate biosynthesis. In Paracoccus denitrificans, this protein is Acetoacetyl-CoA reductase (phaB).